The chain runs to 260 residues: Coiled-coil domain-containing protein 127 (260 aa).

The stretch at 47-135 (ESQKEIEKAR…QIIQEKSQRQ (89 aa)) forms a coiled coil.

This chain is Coiled-coil domain-containing protein 127 (Ccdc127), found in Rattus norvegicus (Rat).